A 159-amino-acid chain; its full sequence is Probable chemoreceptor glutamine deamidase CheD 1 (159 aa).

It belongs to the CheD family.

It catalyses the reaction L-glutaminyl-[protein] + H2O = L-glutamyl-[protein] + NH4(+). Its function is as follows. Probably deamidates glutamine residues to glutamate on methyl-accepting chemotaxis receptors (MCPs), playing an important role in chemotaxis. This chain is Probable chemoreceptor glutamine deamidase CheD 1, found in Methanosarcina acetivorans (strain ATCC 35395 / DSM 2834 / JCM 12185 / C2A).